The following is a 176-amino-acid chain: Nascent polypeptide-associated complex subunit alpha (176 aa).

The NAC-A/B domain maps to 16–80 (PKNEKKAREL…AKVDDMNQRI (65 aa)). The tract at residues 83–110 (AQAAQAAETDAHAGHTHSHGEEDKSPEA) is disordered. Basic and acidic residues predominate over residues 91 to 110 (TDAHAGHTHSHGEEDKSPEA). The UBA domain occupies 138-175 (LDAKDIDIIVEQTQVSRAKAVKALRKHDGDMVNAIMEL).

Belongs to the NAC-alpha family. As to quaternary structure, part of the nascent polypeptide-associated complex (NAC), consisting of EGD2 and EGD1. NAC associates with ribosomes via EGD1.

The protein localises to the cytoplasm. Its subcellular location is the nucleus. Functionally, component of the nascent polypeptide-associated complex (NAC), a dynamic component of the ribosomal exit tunnel, protecting the emerging polypeptides from interaction with other cytoplasmic proteins to ensure appropriate nascent protein targeting. The NAC complex also promotes mitochondrial protein import by enhancing productive ribosome interactions with the outer mitochondrial membrane and blocks the inappropriate interaction of ribosomes translating non-secretory nascent polypeptides with translocation sites in the membrane of the endoplasmic reticulum. EGD2 may also be involved in transcription regulation. The polypeptide is Nascent polypeptide-associated complex subunit alpha (EGD2) (Scheffersomyces stipitis (strain ATCC 58785 / CBS 6054 / NBRC 10063 / NRRL Y-11545) (Yeast)).